The following is a 554-amino-acid chain: Sesquithujene synthase A (554 aa).

Residues Asp-308 and Asp-312 each coordinate Mg(2+). Residues Asp-308 and Asp-312 each contribute to the substrate site. A DDXXD motif motif is present at residues 308–312 (DDMFD). The determine the stereoselectivity of the enzyme stretch occupies residues 407–411 (SIGAN). Residues Arg-449 and Asn-452 each contribute to the substrate site. Residues Asn-452, Ser-456, and Glu-460 each coordinate Mg(2+).

It belongs to the terpene synthase family. Monomer. Mg(2+) is required as a cofactor. Mn(2+) serves as cofactor. As to expression, highly expressed in the husk. Detected in leaves.

Its subcellular location is the cytoplasm. The enzyme catalyses (2E,6E)-farnesyl diphosphate = sesquithujene + diphosphate. The catalysed reaction is (2Z,6Z)-farnesyl diphosphate = (1S,5S,6S)-alpha-bergamotene + diphosphate. It carries out the reaction (2E,6E)-farnesyl diphosphate = (E)-beta-farnesene + diphosphate. It catalyses the reaction (2E,6E)-farnesyl diphosphate = (S)-beta-bisabolene + diphosphate. The enzyme catalyses (2Z,6E)-farnesyl diphosphate = (-)-beta-curcumene + diphosphate. The catalysed reaction is (2E,6E)-farnesyl diphosphate = gamma-curcumene + diphosphate. It carries out the reaction (2E,6E)-farnesyl diphosphate = sesquisabinene B + diphosphate. The protein operates within secondary metabolite biosynthesis; terpenoid biosynthesis. Its function is as follows. Sesquiterpene synthase involved in the production after herbivore attack of a blend of volatiles that attracts natural enemies of herbivores. Converts farnesyl diphosphate to sesquithujene, (S)-beta-bisabolene, (Z)-alpha-bergamotene, sesquisabinene B and several minor products. Can also act in vitro as a monoterpene synthase, converting geranyl diphosphate to (S)-(-)-limonene, beta-myrcene and 11 other monoterpenes. This Zea mays (Maize) protein is Sesquithujene synthase A.